The chain runs to 353 residues: Trans-enoyl reductase fsa3 (353 aa).

NADP(+) is bound at residue 45–48; the sequence is VDTK. 131–138 serves as a coordination point for substrate; the sequence is ISFMTTGL. NADP(+)-binding positions include 166 to 169, 189 to 192, Tyr-207, and 254 to 255; these read SSAT, SPRN, and LE. Residue 275-279 participates in substrate binding; that stretch reads GPQML. 344–345 lines the NADP(+) pocket; sequence IS.

This sequence belongs to the zinc-containing alcohol dehydrogenase family. Monomer.

The catalysed reaction is L-serine + 7 malonyl-CoA + acetyl-CoA + 2 S-adenosyl-L-methionine + ATP + 8 NADPH + 11 H(+) = (5S)-3-[(2E,6R,8E,10E,12E)-2,6-dimethyltetradeca-2,8,10,12-tetraenoyl]-5-(hydroxymethyl)pyrrolidine-2,4-dione + AMP + 2 S-adenosyl-L-homocysteine + 7 CO2 + diphosphate + 8 NADP(+) + 8 CoA + 6 H2O. The protein operates within mycotoxin biosynthesis. In terms of biological role, trans-enoyl reductase; part of the gene cluster that mediates the biosynthesis of HIV-1 integrase inhibitor equisetin and of fusarisetin A, both trans-fused decalin-containing tetramic acids showing also antimicrobial activity. The PKS module of fsa1 together with the enoylreductase fsa3 catalyze the formation of the polyketide unit which is then conjugated to L-serine by the condensation domain of the fsa1 NRPS module. Activity of the Dieckmann cyclase domain (RED) results in release of the Dieckmann product intermediate. Diels-Alderase fsa2 is involved in endo-selective Diels-Alder cycloaddition to form the decalin ring, leading to the production of N-desmethylequisetin also called trichosetin. Subsequent N-methylation is carried out by fsa4 to give equisetin. The enzymatic gene responsible for the conversion of equisetin to fusarisetin A has not been identified yet and is probably located outside of the fsa cluster. This Fusarium sp. (strain FN080326) protein is Trans-enoyl reductase fsa3.